The primary structure comprises 923 residues: RNA polymerase-associated protein RapA (923 aa).

One can recognise a Helicase ATP-binding domain in the interval 162–332; that stretch reads EVGNRVNPRV…FARLRLLDPE (171 aa). Residue 175–182 participates in ATP binding; the sequence is DEVGLGKT. The DEAH box signature appears at 278-281; that stretch reads DEAH. One can recognise a Helicase C-terminal domain in the interval 443–597; sequence KIDWLIDFLK…TCPMGMALFS (155 aa).

This sequence belongs to the SNF2/RAD54 helicase family. RapA subfamily. As to quaternary structure, interacts with the RNAP. Has a higher affinity for the core RNAP than for the holoenzyme. Its ATPase activity is stimulated by binding to RNAP.

Its function is as follows. Transcription regulator that activates transcription by stimulating RNA polymerase (RNAP) recycling in case of stress conditions such as supercoiled DNA or high salt concentrations. Probably acts by releasing the RNAP, when it is trapped or immobilized on tightly supercoiled DNA. Does not activate transcription on linear DNA. Probably not involved in DNA repair. This Haemophilus influenzae (strain ATCC 51907 / DSM 11121 / KW20 / Rd) protein is RNA polymerase-associated protein RapA.